We begin with the raw amino-acid sequence, 421 residues long: UDP-N-acetylglucosamine 1-carboxyvinyltransferase (421 aa).

Residue 22 to 23 (KN) coordinates phosphoenolpyruvate. R93 lines the UDP-N-acetyl-alpha-D-glucosamine pocket. C117 functions as the Proton donor in the catalytic mechanism. C117 is modified (2-(S-cysteinyl)pyruvic acid O-phosphothioketal). UDP-N-acetyl-alpha-D-glucosamine contacts are provided by residues 122–126 (RPVDL), D308, and I330.

The protein belongs to the EPSP synthase family. MurA subfamily.

The protein resides in the cytoplasm. The enzyme catalyses phosphoenolpyruvate + UDP-N-acetyl-alpha-D-glucosamine = UDP-N-acetyl-3-O-(1-carboxyvinyl)-alpha-D-glucosamine + phosphate. It participates in cell wall biogenesis; peptidoglycan biosynthesis. Functionally, cell wall formation. Adds enolpyruvyl to UDP-N-acetylglucosamine. In Pseudomonas putida (strain ATCC 700007 / DSM 6899 / JCM 31910 / BCRC 17059 / LMG 24140 / F1), this protein is UDP-N-acetylglucosamine 1-carboxyvinyltransferase.